The primary structure comprises 369 residues: Histidinol-phosphate aminotransferase 2 (369 aa).

The residue at position 231 (Lys-231) is an N6-(pyridoxal phosphate)lysine.

Belongs to the class-II pyridoxal-phosphate-dependent aminotransferase family. Histidinol-phosphate aminotransferase subfamily. As to quaternary structure, homodimer. Pyridoxal 5'-phosphate serves as cofactor.

The enzyme catalyses L-histidinol phosphate + 2-oxoglutarate = 3-(imidazol-4-yl)-2-oxopropyl phosphate + L-glutamate. The protein operates within amino-acid biosynthesis; L-histidine biosynthesis; L-histidine from 5-phospho-alpha-D-ribose 1-diphosphate: step 7/9. The protein is Histidinol-phosphate aminotransferase 2 of Legionella pneumophila (strain Paris).